We begin with the raw amino-acid sequence, 397 residues long: Putative odorant receptor 83c (397 aa).

Residues 1 to 39 (MSTSESPSSRFRELSKYINSLTNLLGVDFLSPKLKFNYR) are Cytoplasmic-facing. The chain crosses the membrane as a helical span at residues 40–60 (TWTTIFAIANYTGFTVFTILN). At 61-70 (NGGDWRVGLK) the chain is on the extracellular side. Residues 71 to 90 (ASLMTGGLFHGLGKFLTCLL) form a helical membrane-spanning segment. The Cytoplasmic segment spans residues 91-136 (KHQDMRRLVLYSQSIYDEYETRGDSYHRTLNSNIDRLLGIMKIIRN). The chain crosses the membrane as a helical span at residues 137–157 (GYVFAFCLMELLPLAMLMYDG). Topologically, residues 158 to 186 (TRVTAMQYLIPGLPLENNYCYVVTYMIQT) are extracellular. Residues 187 to 207 (VTMLVQGVGFYSGDLFVFLGL) form a helical membrane-spanning segment. At 208–282 (TQILTFADML…ALYYELIATQ (75 aa)) the chain is on the cytoplasmic side. The chain crosses the membrane as a helical span at residues 283-299 (VLSMALAMMLSFCINLS). Residues 300-305 (SFHMPS) lie on the Extracellular side of the membrane. A helical transmembrane segment spans residues 306-326 (AIFFVVSAYSMSIYCILGTIL). The Cytoplasmic segment spans residues 327 to 365 (EFAYDQVYESICNVTWYELSGEQRKLFGFLLRESQYPHN). Residues 366 to 386 (IQILGVMSLSVRTALQIVKLI) traverse the membrane as a helical segment. The Extracellular portion of the chain corresponds to 387–397 (YSVSMMMMNRA).

It belongs to the insect chemoreceptor superfamily. Heteromeric odorant receptor channel (TC 1.A.69) family. Or67d subfamily. Interacts with Orco. Complexes exist early in the endomembrane system in olfactory sensory neurons (OSNs), coupling these complexes to the conserved ciliary trafficking pathway. Expressed in olfactory sensory neurons in the antenna.

It is found in the cell membrane. Functionally, odorant receptor which mediates acceptance or avoidance behavior, depending on its substrates. The odorant receptor repertoire encodes a large collection of odor stimuli that vary widely in identity, intensity, and duration. May form a complex with Orco to form odorant-sensing units, providing sensitive and prolonged odorant signaling and calcium permeability. In Drosophila melanogaster (Fruit fly), this protein is Putative odorant receptor 83c (Or83c).